The following is a 337-amino-acid chain: HTH-type transcriptional repressor PurR (337 aa).

The 55-residue stretch at 2–56 (ATIKDVAKLAAVSTTTVSHVINKTRFVAEATQKRVWEAVEELNYAPSAVARSLKC) folds into the HTH lacI-type domain. The H-T-H motif DNA-binding region spans 4–23 (IKDVAKLAAVSTTTVSHVIN). The DNA-binding element occupies 48–56 (SAVARSLKC). 5 residues coordinate hypoxanthine: Phe73, Lys189, Thr191, Phe220, and Asp276.

In terms of assembly, homodimer.

The protein operates within purine metabolism; purine nucleotide biosynthesis [regulation]. Functionally, is the main repressor of the genes involved in the de novo synthesis of purine nucleotides, regulating purB, purC, purEK, purF, purHD, purL, purMN and guaBA expression. PurR is allosterically activated to bind its cognate DNA by binding the purine corepressors, hypoxanthine or guanine, thereby effecting transcription repression. The polypeptide is HTH-type transcriptional repressor PurR (Aliivibrio fischeri (strain ATCC 700601 / ES114) (Vibrio fischeri)).